A 191-amino-acid chain; its full sequence is Ciliary microtubule-associated protein 3 (191 aa).

Interacts with proteins involved in ciliary transport, including ARL13B, CETN1, KIF3A, RAB6A, RAB8A, TUBB1 and TUBG1. Interacts with AURKA.

Its subcellular location is the cytoplasmic vesicle. The protein localises to the golgi apparatus. It localises to the trans-Golgi network. The protein resides in the cytoplasm. Its function is as follows. During primary cilia disassembly, involved in cilia disassembly. Required specifically to control cilia retraction as well as the liberation and duplication of the basal body/centrosome. May act by stimulating AURKA activity at the basal body in a cell cycle-dependent manner. The polypeptide is Ciliary microtubule-associated protein 3 (Homo sapiens (Human)).